The sequence spans 278 residues: MTVLHSVDFFPSGNASVAIEPRLPQADFPEHHHDFHEIVIVEHGTGIHVFNGQPYTITGGTVCFVRDHDRHLYEHTDNLCLTNVLYRSPDRFQFLAGLNQLLPQELDGQYPSHWRVNHSVLQQVRQLVAQMEQQEGENDLPSTASREILFMQLLLLLRKSSLQENLENSASRLNLLLAWLEDHFADEVNWDAVAEQFSLSLRTLHRQLKQQTGLTPQRYLNRLRLMKARHLLRHSEASVTDIAYRCGFSDSNHFSTLFRREFNWSPRDIRQGRDGFLQ.

An HTH araC/xylS-type domain is found at 174 to 272 (NLLLAWLEDH…NWSPRDIRQG (99 aa)). DNA-binding regions (H-T-H motif) lie at residues 191 to 212 (DAVAEQFSLSLRTLHRQLKQQT) and 239 to 262 (VTDIAYRCGFSDSNHFSTLFRREF).

Binds DNA as a dimer.

It is found in the cytoplasm. Its function is as follows. Activates expression of the rhaBAD and rhaT operons. The polypeptide is HTH-type transcriptional activator RhaS (Escherichia coli (strain SE11)).